A 73-amino-acid polypeptide reads, in one-letter code: Large ribosomal subunit protein bL31 (73 aa).

It belongs to the bacterial ribosomal protein bL31 family. Type A subfamily. In terms of assembly, part of the 50S ribosomal subunit.

Its function is as follows. Binds the 23S rRNA. In Synechococcus sp. (strain JA-3-3Ab) (Cyanobacteria bacterium Yellowstone A-Prime), this protein is Large ribosomal subunit protein bL31.